The primary structure comprises 363 residues: Dihydroorotate dehydrogenase (quinone) (363 aa).

FMN-binding positions include 62 to 66 (AGYDK) and Thr86. Lys66 provides a ligand contact to substrate. A substrate-binding site is contributed by 111 to 115 (NRLGF). FMN-binding residues include Asn140 and Asn171. Position 171 (Asn171) interacts with substrate. Ser174 acts as the Nucleophile in catalysis. Position 176 (Asn176) interacts with substrate. Residues Lys216 and Ser244 each contribute to the FMN site. Residue 245 to 246 (NT) participates in substrate binding. Residues Gly266, Gly295, and 316 to 317 (YT) each bind FMN.

This sequence belongs to the dihydroorotate dehydrogenase family. Type 2 subfamily. In terms of assembly, monomer. FMN is required as a cofactor.

Its subcellular location is the cell membrane. The enzyme catalyses (S)-dihydroorotate + a quinone = orotate + a quinol. It functions in the pathway pyrimidine metabolism; UMP biosynthesis via de novo pathway; orotate from (S)-dihydroorotate (quinone route): step 1/1. In terms of biological role, catalyzes the conversion of dihydroorotate to orotate with quinone as electron acceptor. In Chelativorans sp. (strain BNC1), this protein is Dihydroorotate dehydrogenase (quinone).